The primary structure comprises 564 residues: Ribonuclease J (564 aa).

His85, His87, Asp89, His90, His153, and Asp175 together coordinate Zn(2+). Position 375 to 379 (375 to 379 (HVSGH)) interacts with substrate. His401 contacts Zn(2+).

The protein belongs to the metallo-beta-lactamase superfamily. RNA-metabolizing metallo-beta-lactamase-like family. Bacterial RNase J subfamily. In terms of assembly, homodimer, may be a subunit of the RNA degradosome. The cofactor is Zn(2+).

The protein resides in the cytoplasm. Functionally, an RNase that has 5'-3' exonuclease and possibly endonuclease activity. Plays a role in 16S and 23S rRNA processing. Might have a role in mRNA maturation and/or decay. This Sinorhizobium meliloti (strain Sm2011 / Rm2011 / 2011) protein is Ribonuclease J.